The following is a 95-amino-acid chain: Small ribosomal subunit protein bS6 (95 aa).

The protein belongs to the bacterial ribosomal protein bS6 family.

Binds together with bS18 to 16S ribosomal RNA. The protein is Small ribosomal subunit protein bS6 of Rhodococcus jostii (strain RHA1).